Here is a 53-residue protein sequence, read N- to C-terminus: UPF0391 membrane protein SG0393 (53 aa).

Transmembrane regions (helical) follow at residues 4–24 (WGII…GGLA) and 27–47 (AAWA…ISLF).

It belongs to the UPF0391 family.

The protein resides in the cell membrane. This Sodalis glossinidius (strain morsitans) protein is UPF0391 membrane protein SG0393.